We begin with the raw amino-acid sequence, 428 residues long: C4-dicarboxylate transport protein (428 aa).

A run of 8 helical transmembrane segments spans residues 8–28 (VLYVQVIFAIVVGVILGHYYP), 44–64 (LIKMVIGPIIFCTVVTGIAGM), 78–98 (LLYFEIVSTCALVLGLAATHI), 148–168 (GEILQILLIALLFGSVLAHLG), 184–204 (VLFGIVHIVTKLAPIGAFGAM), 222–242 (LIGTFYLTSVVFVLVVLGAIA), 307–327 (IYMTMAVLFIAQATNIELTWM), and 355–375 (AATLAVVPTIPLSGMVLILGI).

Belongs to the dicarboxylate/amino acid:cation symporter (DAACS) (TC 2.A.23) family.

The protein localises to the cell inner membrane. Functionally, responsible for the transport of dicarboxylates such as succinate, fumarate, and malate from the periplasm across the membrane. The sequence is that of C4-dicarboxylate transport protein from Burkholderia mallei (strain ATCC 23344).